Reading from the N-terminus, the 233-residue chain is Zinc import ATP-binding protein ZnuC (233 aa).

Positions 6-222 (IEFRNVSKKF…SEFSNALSSL (217 aa)) constitute an ABC transporter domain. 38 to 45 (GPNGAGKT) lines the ATP pocket.

Belongs to the ABC transporter superfamily. Zinc importer (TC 3.A.1.15.5) family. As to quaternary structure, the complex is composed of two ATP-binding proteins (ZnuC), two transmembrane proteins (ZnuB) and a solute-binding protein (ZnuA).

The protein localises to the cell inner membrane. It catalyses the reaction Zn(2+)(out) + ATP(in) + H2O(in) = Zn(2+)(in) + ADP(in) + phosphate(in) + H(+)(in). Part of the ABC transporter complex ZnuABC involved in zinc import. Responsible for energy coupling to the transport system. This is Zinc import ATP-binding protein ZnuC from Rickettsia prowazekii (strain Madrid E).